The following is a 412-amino-acid chain: Mast cell carboxypeptidase A (412 aa).

The N-terminal stretch at 1-10 is a signal peptide; sequence LMGVIYSTLA. Residues 11–104 constitute a propeptide, activation peptide; it reads IAPVQFDREK…IDKQFDVKEE (94 aa). Positions 113 to 407 constitute a Peptidase M14 domain; the sequence is KYNDWNKIVS…LSVKFIAKYI (295 aa). Cystine bridges form between Cys168–Cys181 and Cys240–Cys263. His171 and Glu174 together coordinate Zn(2+). Residue His299 coordinates Zn(2+). Residue Glu373 is the Proton donor/acceptor of the active site.

Belongs to the peptidase M14 family. Requires Zn(2+) as cofactor.

The protein resides in the cytoplasmic vesicle. It is found in the secretory vesicle. The enzyme catalyses Release of a C-terminal amino acid, but little or no action with -Asp, -Glu, -Arg, -Lys or -Pro.. The chain is Mast cell carboxypeptidase A (Cpa3) from Rattus norvegicus (Rat).